The sequence spans 119 residues: Protein FAM24A-like (119 aa).

The signal sequence occupies residues 1 to 40 (MYKPFDLRTIITIIIGCGILTAMFLLIGLVLCLYSKISKA).

The protein belongs to the FAM24 family.

It is found in the secreted. The polypeptide is Protein FAM24A-like (Mus musculus (Mouse)).